Consider the following 356-residue polypeptide: Chorismate synthase (356 aa).

Arginine 48 and arginine 54 together coordinate NADP(+). Residues 125-127 (RSS), 237-238 (NA), glycine 281, 296-300 (KPTSS), and arginine 322 each bind FMN.

It belongs to the chorismate synthase family. Homotetramer. FMNH2 serves as cofactor.

The enzyme catalyses 5-O-(1-carboxyvinyl)-3-phosphoshikimate = chorismate + phosphate. Its pathway is metabolic intermediate biosynthesis; chorismate biosynthesis; chorismate from D-erythrose 4-phosphate and phosphoenolpyruvate: step 7/7. Its function is as follows. Catalyzes the anti-1,4-elimination of the C-3 phosphate and the C-6 proR hydrogen from 5-enolpyruvylshikimate-3-phosphate (EPSP) to yield chorismate, which is the branch point compound that serves as the starting substrate for the three terminal pathways of aromatic amino acid biosynthesis. This reaction introduces a second double bond into the aromatic ring system. The polypeptide is Chorismate synthase (Novosphingobium aromaticivorans (strain ATCC 700278 / DSM 12444 / CCUG 56034 / CIP 105152 / NBRC 16084 / F199)).